Reading from the N-terminus, the 198-residue chain is MKKLYLASGSPRRRELLTQIGIPFTAISADIDETPLANESPLAYVERLARGKAEAGRRIVTSEPPFCVLGADTAVVLDGKILGKPVDEADACAMLMMLSGKEHEVLTAIAVLDGERCESRVVRSLVRFRSISREEAAAYWASGEPRDKAGGYGIQGLGAVFVAGLNGSYSAVVGLPVCESAELLGHFGIPCWQTLNAQ.

Asp72 acts as the Proton acceptor in catalysis.

It belongs to the Maf family. YhdE subfamily. It depends on a divalent metal cation as a cofactor.

It is found in the cytoplasm. It catalyses the reaction dTTP + H2O = dTMP + diphosphate + H(+). The catalysed reaction is UTP + H2O = UMP + diphosphate + H(+). In terms of biological role, nucleoside triphosphate pyrophosphatase that hydrolyzes dTTP and UTP. May have a dual role in cell division arrest and in preventing the incorporation of modified nucleotides into cellular nucleic acids. The polypeptide is dTTP/UTP pyrophosphatase (Pseudomonas fluorescens (strain Pf0-1)).